The following is a 516-amino-acid chain: Beta-glucosidase 1 (516 aa).

The N-terminal stretch at 1–21 (MGHRLVVVLLLALLVAGAARA) is a signal peptide. Residue Q68 coordinates a beta-D-glucoside. N-linked (GlcNAc...) asparagine glycosylation is present at N96. A beta-D-glucoside contacts are provided by residues H169 and 214–215 (NE). E215 serves as the catalytic Proton donor. A disulfide bridge links C234 with C237. N290 carries N-linked (GlcNAc...) asparagine glycosylation. Y353 is an a beta-D-glucoside binding site. An N-linked (GlcNAc...) asparagine glycan is attached at N364. E424 is an a beta-D-glucoside binding site. E424 acts as the Nucleophile in catalysis. N-linked (GlcNAc...) asparagine glycosylation occurs at N432. A beta-D-glucoside-binding positions include W471, 478–479 (EW), and F487.

The protein belongs to the glycosyl hydrolase 1 family.

The catalysed reaction is Hydrolysis of terminal, non-reducing beta-D-glucosyl residues with release of beta-D-glucose.. In Oryza sativa subsp. japonica (Rice), this protein is Beta-glucosidase 1 (BGLU1).